Reading from the N-terminus, the 354-residue chain is Guanine nucleotide-binding protein alpha-3 subunit (354 aa).

The N-myristoyl glycine moiety is linked to residue Gly-2. Cys-4 carries S-palmitoyl cysteine lipidation. One can recognise a G-alpha domain in the interval 33-354 (KECKILLLGS…TNALKDSGIL (322 aa)). The interval 36–49 (KILLLGSGESGKST) is G1 motif. GTP contacts are provided by residues 41–48 (GSGESGKS), 177–183 (LRARSKT), 202–206 (DVGGQ), 271–274 (NKID), and Ala-326. Ser-48 and Thr-183 together coordinate Mg(2+). The tract at residues 175–183 (DVLRARSKT) is G2 motif. The segment at 198-207 (IHLFDVGGQR) is G3 motif. Residues 267–274 (ILFLNKID) form a G4 motif region. The tract at residues 324 to 329 (TQATDT) is G5 motif.

It belongs to the G-alpha family. In terms of assembly, g proteins are composed of 3 units; alpha, beta and gamma. The alpha chain contains the guanine nucleotide binding site.

In terms of biological role, guanine nucleotide-binding proteins (G proteins) are involved as modulators or transducers in various transmembrane signaling systems. This subunit is involved in cAMP regulation and morphogenesis. It is essential for dimorphic switching in haploid cells. The polypeptide is Guanine nucleotide-binding protein alpha-3 subunit (FIL1) (Ustilago hordei (Barley covered smut fungus)).